Reading from the N-terminus, the 723-residue chain is ATP-dependent zinc metalloprotease YME1 homolog (723 aa).

A helical membrane pass occupies residues 198 to 220; that stretch reads LTRFYIFLVFCIFFGYLTGRIRV. 288–295 contacts ATP; the sequence is GPPGTGKT. His-509 is a binding site for Zn(2+). The active site involves Glu-510. The Zn(2+) site is built by His-513 and Asp-587.

This sequence in the N-terminal section; belongs to the AAA ATPase family. The protein in the C-terminal section; belongs to the peptidase M41 family. Zn(2+) is required as a cofactor.

The protein localises to the mitochondrion inner membrane. Its subcellular location is the mitochondrion. ATP-dependent metalloprotease that catalyzes the degradation of folded and unfolded proteins with a suitable degron sequence in the mitochondrial intermembrane region. Plays an important role in regulating mitochondrial morphology and function. This is ATP-dependent zinc metalloprotease YME1 homolog (ymel-1) from Caenorhabditis elegans.